The primary structure comprises 21 residues: NGPNGKSQSIIVGPWGDRVTN.

Over residues 1 to 10 the composition is skewed to polar residues; the sequence is NGPNGKSQSI. Residues 1 to 21 form a disordered region; sequence NGPNGKSQSIIVGPWGDRVTN.

The protein belongs to the jacalin lectin family. As to quaternary structure, formed of four alpha chains and four beta chains.

D-galactose-specific lectin, binds the T-antigen structure Gal-beta1,3-GalNAc. This Maclura pomifera (Osage orange) protein is Agglutinin beta-1 chain.